A 92-amino-acid polypeptide reads, in one-letter code: Small ribosomal subunit protein uS19c (92 aa).

It belongs to the universal ribosomal protein uS19 family.

It localises to the plastid. The protein localises to the chloroplast. In terms of biological role, protein S19 forms a complex with S13 that binds strongly to the 16S ribosomal RNA. This Eucalyptus globulus subsp. globulus (Tasmanian blue gum) protein is Small ribosomal subunit protein uS19c.